Reading from the N-terminus, the 85-residue chain is Granaticin polyketide synthase acyl carrier protein (85 aa).

One can recognise a Carrier domain in the interval Arg3–Gln81. An O-(pantetheine 4'-phosphoryl)serine modification is found at Ser41.

Post-translationally, 4'-phosphopantetheine is transferred from CoA to a specific serine of the apo-ACP-like protein.

It participates in antibiotic biosynthesis; granaticin biosynthesis. Its function is as follows. Acyl carrier protein. The sequence is that of Granaticin polyketide synthase acyl carrier protein from Streptomyces violaceoruber.